Consider the following 163-residue polypeptide: Large ribosomal subunit protein uL10 (163 aa).

The protein belongs to the universal ribosomal protein uL10 family. As to quaternary structure, part of the ribosomal stalk of the 50S ribosomal subunit. The N-terminus interacts with L11 and the large rRNA to form the base of the stalk. The C-terminus forms an elongated spine to which L12 dimers bind in a sequential fashion forming a multimeric L10(L12)X complex.

Forms part of the ribosomal stalk, playing a central role in the interaction of the ribosome with GTP-bound translation factors. The chain is Large ribosomal subunit protein uL10 from Glaesserella parasuis serovar 5 (strain SH0165) (Haemophilus parasuis).